The sequence spans 327 residues: uncharacterized protein (327 aa).

Positions proline 12–proline 31 are disordered. The next 2 helical transmembrane spans lie at valine 183–leucine 203 and valine 292–methionine 312.

The protein localises to the membrane. This is an uncharacterized protein from Arabidopsis thaliana (Mouse-ear cress).